A 308-amino-acid chain; its full sequence is GTPase Era (308 aa).

The 168-residue stretch at 14–181 (RCGFVALIGA…RRALAAAMPE (168 aa)) folds into the Era-type G domain. The segment at 22-29 (GAPNVGKS) is G1. 22-29 (GAPNVGKS) serves as a coordination point for GTP. A G2 region spans residues 48 to 52 (QTTRA). The interval 69–72 (DTPG) is G3. Residues 69–73 (DTPGI) and 131–134 (NKID) contribute to the GTP site. Residues 131 to 134 (NKID) form a G4 region. The interval 160–162 (VAA) is G5. The region spanning 212–289 (LHQELPYQST…HLFLFVKVRD (78 aa)) is the KH type-2 domain.

This sequence belongs to the TRAFAC class TrmE-Era-EngA-EngB-Septin-like GTPase superfamily. Era GTPase family. As to quaternary structure, monomer.

The protein resides in the cytoplasm. It localises to the cell inner membrane. Functionally, an essential GTPase that binds both GDP and GTP, with rapid nucleotide exchange. Plays a role in 16S rRNA processing and 30S ribosomal subunit biogenesis and possibly also in cell cycle regulation and energy metabolism. The protein is GTPase Era of Afipia carboxidovorans (strain ATCC 49405 / DSM 1227 / KCTC 32145 / OM5) (Oligotropha carboxidovorans).